Here is an 84-residue protein sequence, read N- to C-terminus: Fulditoxin (84 aa).

An N-terminal signal peptide occupies residues 1-21 (MKTLLLTLVVVTIVCLDLGNS). Intrachain disulfides connect cysteine 24–cysteine 41, cysteine 34–cysteine 59, cysteine 63–cysteine 71, and cysteine 72–cysteine 77. Histidine 50 provides a ligand contact to Zn(2+).

It belongs to the three-finger toxin family. Short-chain subfamily. In terms of assembly, homodimer; non-covalently linked. Is able to form a tetramer of dimers in the presence of 2 zinc ions. As to expression, expressed by the venom gland.

The protein localises to the secreted. Its function is as follows. Postsynaptic neurotoxin that produces potent, and completely reversible, postsynaptic neuromuscular blockade, as well as broad spectrum inhibition of human muscle and neuronal nicotinic acetylcholine receptors (nAChRs). Inhibition is potent or moderate, depending on the receptor (alpha-1-beta-1-delta-epsilon/CHRNA1-CHRNB1-CHRND-CHRNE (IC(50)=2.56 uM), alpha-4-beta-2/CHRNA4-CHRNB2 (IC(50)=1.8 uM), alpha-7/CHRNA7 (IC(50)=7 uM), and alpha-3-beta-2/CHRNA3-CHRNB2 (IC(50)=12.6 uM)). Acts as a competitive antagonist of ACh. Binds to chicken muscle-type nicotinic acetylcholine receptor (AChR) with high potency compared with the cloned human receptor. Unlike short-chain alpha-3FTxs that only bind to muscle nAChRs, this toxin utilizes dimerization to expand its pharmacological targets to block neuronal nAChRs. This chain is Fulditoxin, found in Micrurus fulvius (Eastern coral snake).